A 345-amino-acid chain; its full sequence is Aminopeptidase YpdE (345 aa).

2 residues coordinate a divalent metal cation: histidine 62 and aspartate 166. Catalysis depends on glutamate 198, which acts as the Proton acceptor. Glutamate 199, aspartate 221, and histidine 308 together coordinate a divalent metal cation.

It belongs to the peptidase M42 family. The cofactor is Co(2+). Ni(2+) is required as a cofactor. Mn(2+) serves as cofactor. Requires Cu(2+) as cofactor.

Functionally, has a broad aminopeptidase activity on non-blocked peptides by progressively cleaving amino acids off the peptide substrate. Aminopeptidase activity stops at the residue before the first proline in the peptide. Cannot cleave when proline is the first N-terminal residue. The sequence is that of Aminopeptidase YpdE (ypdE) from Escherichia coli (strain K12).